Reading from the N-terminus, the 310-residue chain is GTPase Era (310 aa).

The Era-type G domain occupies 17–184 (HSGFVALIGA…LDYLAQALPA (168 aa)). A G1 region spans residues 25–32 (GAPNAGKS). 25–32 (GAPNAGKS) contributes to the GTP binding site. The interval 51 to 55 (QTTRA) is G2. The interval 72–75 (DTPG) is G3. GTP-binding positions include 72-76 (DTPGI) and 134-137 (NKVD). The segment at 134–137 (NKVD) is G4. The segment at 163–165 (VSA) is G5. The KH type-2 domain occupies 215-292 (LHQELPYSSH…HLFLFVKVRE (78 aa)).

It belongs to the TRAFAC class TrmE-Era-EngA-EngB-Septin-like GTPase superfamily. Era GTPase family. In terms of assembly, monomer.

The protein localises to the cytoplasm. It is found in the cell inner membrane. Functionally, an essential GTPase that binds both GDP and GTP, with rapid nucleotide exchange. Plays a role in 16S rRNA processing and 30S ribosomal subunit biogenesis and possibly also in cell cycle regulation and energy metabolism. In Mesorhizobium japonicum (strain LMG 29417 / CECT 9101 / MAFF 303099) (Mesorhizobium loti (strain MAFF 303099)), this protein is GTPase Era.